Reading from the N-terminus, the 514-residue chain is ATP synthase subunit alpha (514 aa).

170–177 (GDRQIGKS) serves as a coordination point for ATP.

The protein belongs to the ATPase alpha/beta chains family. In terms of assembly, F-type ATPases have 2 components, CF(1) - the catalytic core - and CF(0) - the membrane proton channel. CF(1) has five subunits: alpha(3), beta(3), gamma(1), delta(1), epsilon(1). CF(0) has three main subunits: a(1), b(2) and c(9-12). The alpha and beta chains form an alternating ring which encloses part of the gamma chain. CF(1) is attached to CF(0) by a central stalk formed by the gamma and epsilon chains, while a peripheral stalk is formed by the delta and b chains.

The protein resides in the cell inner membrane. It catalyses the reaction ATP + H2O + 4 H(+)(in) = ADP + phosphate + 5 H(+)(out). In terms of biological role, produces ATP from ADP in the presence of a proton gradient across the membrane. The alpha chain is a regulatory subunit. This chain is ATP synthase subunit alpha, found in Chromohalobacter salexigens (strain ATCC BAA-138 / DSM 3043 / CIP 106854 / NCIMB 13768 / 1H11).